Reading from the N-terminus, the 464-residue chain is 3-isopropylmalate dehydratase large subunit (464 aa).

The [4Fe-4S] cluster site is built by Cys-345, Cys-405, and Cys-408.

It belongs to the aconitase/IPM isomerase family. LeuC type 1 subfamily. As to quaternary structure, heterodimer of LeuC and LeuD. Requires [4Fe-4S] cluster as cofactor.

The catalysed reaction is (2R,3S)-3-isopropylmalate = (2S)-2-isopropylmalate. The protein operates within amino-acid biosynthesis; L-leucine biosynthesis; L-leucine from 3-methyl-2-oxobutanoate: step 2/4. Functionally, catalyzes the isomerization between 2-isopropylmalate and 3-isopropylmalate, via the formation of 2-isopropylmaleate. This chain is 3-isopropylmalate dehydratase large subunit, found in Bacteroides thetaiotaomicron (strain ATCC 29148 / DSM 2079 / JCM 5827 / CCUG 10774 / NCTC 10582 / VPI-5482 / E50).